The sequence spans 506 residues: ATP synthase subunit alpha (506 aa).

170 to 177 (GDRQTGKT) contributes to the ATP binding site.

The protein belongs to the ATPase alpha/beta chains family. As to quaternary structure, F-type ATPases have 2 components, CF(1) - the catalytic core - and CF(0) - the membrane proton channel. CF(1) has five subunits: alpha(3), beta(3), gamma(1), delta(1), epsilon(1). CF(0) has four main subunits: a(1), b(1), b'(1) and c(9-12).

It is found in the cellular thylakoid membrane. It carries out the reaction ATP + H2O + 4 H(+)(in) = ADP + phosphate + 5 H(+)(out). In terms of biological role, produces ATP from ADP in the presence of a proton gradient across the membrane. The alpha chain is a regulatory subunit. In Parasynechococcus marenigrum (strain WH8102), this protein is ATP synthase subunit alpha.